The sequence spans 66 residues: Beta-toxin Chui2 (66 aa).

One can recognise an LCN-type CS-alpha/beta domain in the interval Lys1–Asn66. 4 disulfide bridges follow: Cys12/Cys65, Cys16/Cys41, Cys25/Cys46, and Cys29/Cys48. An Asparagine amide modification is found at Asn66.

It belongs to the long (4 C-C) scorpion toxin superfamily. Sodium channel inhibitor family. Beta subfamily. Expressed by the venom gland.

It localises to the secreted. Functionally, beta toxins bind voltage-independently at site-4 of sodium channels (Nav) and shift the voltage of activation toward more negative potentials thereby affecting sodium channel activation and promoting spontaneous and repetitive firing. This Centruroides huichol (Scorpion) protein is Beta-toxin Chui2.